Reading from the N-terminus, the 2104-residue chain is 5'-3' DNA helicase ZGRF1 (2104 aa).

The segment covering 335-345 (SSPIHSSTVDG) has biased composition (polar residues). A disordered region spans residues 335 to 359 (SSPIHSSTVDGNDTERKPKAQEDDV). Phosphoserine is present on Ser336. A compositionally biased stretch (basic and acidic residues) spans 347-356 (DTERKPKAQE). 2 positions are modified to phosphoserine: Ser793 and Ser864. Residues Cys1349, His1351, Cys1374, and Cys1382 each coordinate Zn(2+). The GRF-type zinc-finger motif lies at 1349 to 1391 (CHHSQPAKLVMVKKEGPNKGRLFYTCDGPKADRCKFFKWLEDV). A disordered region spans residues 2085–2104 (VEEKQKKKSEKEKSKDKSHS).

Interacts with DNA repair protein RAD51; the interaction promotes RAD51 strand exchange activity. Also interacts with DNA repair proteins EXO1 and BRCA1; the interactions are increased following DNA damage induction.

Its subcellular location is the nucleus. The enzyme catalyses ATP + H2O = ADP + phosphate + H(+). The catalysed reaction is Couples ATP hydrolysis with the unwinding of duplex DNA at the replication fork by translocating in the 5'-3' direction. This creates two antiparallel DNA single strands (ssDNA). The leading ssDNA polymer is the template for DNA polymerase III holoenzyme which synthesizes a continuous strand.. Its function is as follows. 5'-3' DNA helicase which is recruited to sites of DNA damage and promotes repair of replication-blocking DNA lesions through stimulation of homologous recombination (HR). Promotes HR by directly stimulating RAD51-mediated strand exchange activity. Not required to load RAD51 at sites of DNA damage but promotes recombinational repair after RAD51 recruitment. Also promotes HR by positively regulating EXO1-mediated DNA end resection of double-strand breaks. Required for recruitment of replication protein RPA2 to DNA damage sites. Promotes the initiation of the G2/M checkpoint but not its maintenance. Catalyzes Holliday junction branch migration and dissociation of D-loops and DNA flaps. The sequence is that of 5'-3' DNA helicase ZGRF1 (ZGRF1) from Homo sapiens (Human).